A 608-amino-acid chain; its full sequence is Elongation factor 4 (608 aa).

Residues 11–193 form the tr-type G domain; sequence DRIRNFSIIA…QIVQKIPAPS (183 aa). GTP-binding positions include 23–28 and 140–143; these read DHGKST and NKID.

The protein belongs to the TRAFAC class translation factor GTPase superfamily. Classic translation factor GTPase family. LepA subfamily.

Its subcellular location is the cell membrane. The enzyme catalyses GTP + H2O = GDP + phosphate + H(+). Its function is as follows. Required for accurate and efficient protein synthesis under certain stress conditions. May act as a fidelity factor of the translation reaction, by catalyzing a one-codon backward translocation of tRNAs on improperly translocated ribosomes. Back-translocation proceeds from a post-translocation (POST) complex to a pre-translocation (PRE) complex, thus giving elongation factor G a second chance to translocate the tRNAs correctly. Binds to ribosomes in a GTP-dependent manner. This is Elongation factor 4 from Anoxybacillus flavithermus (strain DSM 21510 / WK1).